The chain runs to 349 residues: Green-sensitive opsin-4 (349 aa).

Over 1-36 the chain is Extracellular; it reads MNGTEGNNFYIPLSNRTGLARSPYEYPQYYLAEPWQ. 2 N-linked (GlcNAc...) asparagine glycosylation sites follow: Asn-2 and Asn-15. A helical membrane pass occupies residues 37 to 61; it reads FKLLAVYMFFLICLGFPINGLTLLV. At 62–73 the chain is on the cytoplasmic side; it reads TAQHKKLRQPLN. The chain crosses the membrane as a helical span at residues 74-99; that stretch reads FILVNLAVAGTIMVCFGFTVTFYTAI. At 100–113 the chain is on the extracellular side; that stretch reads NGYFVLGPTGCAIE. A disulfide bridge connects residues Cys-110 and Cys-187. A helical transmembrane segment spans residues 114–133; the sequence is GFMATLGGEVALWSLVVLAV. Residues 134-152 lie on the Cytoplasmic side of the membrane; it reads ERYIVVCKPMGSFKFSASH. Residues 153–176 form a helical membrane-spanning segment; that stretch reads AFAGCAFTWVMAMACAAPPLVGWS. The Extracellular segment spans residues 177-202; that stretch reads RYIPEGMQCSCGPDYYTLNPEYNNES. Residue Asn-200 is glycosylated (N-linked (GlcNAc...) asparagine). A helical membrane pass occupies residues 203-230; that stretch reads YVLYMFICHFILPVTIIFFTYGRLVCTV. Residues 231 to 252 lie on the Cytoplasmic side of the membrane; the sequence is KAAAAQQQESESTQKAEREVTR. The chain crosses the membrane as a helical span at residues 253–276; it reads MVILMVLGFLIAWTPYATVAAWIF. Residues 277 to 284 lie on the Extracellular side of the membrane; the sequence is FNKGAAFS. Residues 285 to 309 traverse the membrane as a helical segment; sequence AQFMAVPAFFSKTSALYNPVIYVLL. An N6-(retinylidene)lysine modification is found at Lys-296. At 310-349 the chain is on the cytoplasmic side; that stretch reads NKQFRNCMLTTLFCGKNPLGDDESSTVSTSKTEVSSVSPA. A disordered region spans residues 329 to 349; sequence GDDESSTVSTSKTEVSSVSPA. Residues 334–349 show a composition bias toward low complexity; sequence STVSTSKTEVSSVSPA.

It belongs to the G-protein coupled receptor 1 family. Opsin subfamily. In terms of processing, phosphorylated on some or all of the serine and threonine residues present in the C-terminal region. As to expression, retinal double cone accessory photoreceptor cell outer segments.

The protein localises to the membrane. Functionally, visual pigments are the light-absorbing molecules that mediate vision. They consist of an apoprotein, opsin, covalently linked to cis-retinal. The polypeptide is Green-sensitive opsin-4 (opn1mw4) (Danio rerio (Zebrafish)).